We begin with the raw amino-acid sequence, 740 residues long: ATP-dependent zinc metalloprotease YME1L (740 aa).

At 1-256 the chain is on the mitochondrial matrix side; the sequence is MFSTTTHSVP…KSGKTMKYLK (256 aa). The helical transmembrane segment at 257–277 threads the bilayer; sequence TLQTIVVIVVFLGIFLSFFTT. Topologically, residues 278–740 are mitochondrial intermembrane; sequence SNGSVFRSIQ…IKAILNESQT (463 aa). 347–351 is an ATP binding site; it reads GTGKT. Position 563 (His563) interacts with Zn(2+). Glu564 is a catalytic residue. 2 residues coordinate Zn(2+): His567 and Asp641.

The protein in the N-terminal section; belongs to the AAA ATPase family. This sequence in the C-terminal section; belongs to the peptidase M41 family. Zn(2+) is required as a cofactor.

It localises to the mitochondrion inner membrane. Its function is as follows. ATP-dependent metalloprotease that catalyzes the degradation of folded and unfolded proteins with a suitable degron sequence in the mitochondrial intermembrane region. Plays an important role in regulating mitochondrial morphology and function by cleaving Opa1, giving rise to a form of Opa1 that promotes maintenance of normal mitochondrial structure and mitochondrial protein metabolism. Ensures cell proliferation, maintains normal cristae morphology and complex I respiration activity, promotes antiapoptotic activity and protects mitochondria from the accumulation of oxidatively damaged membrane proteins. Required to control the accumulation of nonassembled respiratory chain subunits such as ND-30. In Drosophila melanogaster (Fruit fly), this protein is ATP-dependent zinc metalloprotease YME1L.